A 754-amino-acid chain; its full sequence is Endothelin-converting enzyme 1 (754 aa).

Residues 1–52 (MMSTYKRATLDEEDLVDSLSESDVYPNHLQVNFRGPRNGQRCWAARTPVEKR) lie on the Cytoplasmic side of the membrane. Residue T9 is modified to Phosphothreonine. The chain crosses the membrane as a helical; Signal-anchor for type II membrane protein span at residues 53 to 73 (LVVLVALLAAALVACLAVLGI). Residues 74-754 (QYQTRTPSVC…MNPHHKCEVW (681 aa)) lie on the Extracellular side of the membrane. One can recognise a Peptidase M13 domain in the interval 82 to 754 (VCLSEACISV…MNPHHKCEVW (673 aa)). Disulfide bonds link C83-C88, C106-C739, C114-C699, C169-C419, and C628-C751. N-linked (GlcNAc...) asparagine glycosylation is found at N150, N171, N194, N254, N300, N346, N367, and N523. H591 serves as a coordination point for Zn(2+). E592 is an active-site residue. A Zn(2+)-binding site is contributed by H595. Residues N616 and N635 are each glycosylated (N-linked (GlcNAc...) asparagine). E651 is a Zn(2+) binding site. Catalysis depends on D655, which acts as the Proton donor.

The protein belongs to the peptidase M13 family. As to quaternary structure, homodimer; disulfide-linked. Interacts with PPP1R16B. Interacts with TSPAN8; this interaction recruits the endothelin converting enzyme ECE1 to tetraspanin-enriched microdomains and positively modulates its enzymatic activity. The cofactor is Zn(2+).

The protein localises to the cell membrane. It catalyses the reaction Hydrolysis of the 21-Trp-|-Val-22 bond in big endothelin to form endothelin 1.. With respect to regulation, inhibited by phosphoramidon. Converts big endothelin-1 to endothelin-1. The chain is Endothelin-converting enzyme 1 (ECE1) from Bos taurus (Bovine).